Consider the following 224-residue polypeptide: Transcription factor HEC3 (224 aa).

Disordered stretches follow at residues 22 to 42 (SSNN…DPIG) and 68 to 88 (SLTT…EEEP). Over residues 28–37 (KNDDHHHQHN) the composition is skewed to basic and acidic residues. Over residues 68-77 (SLTTTTLLSG) the composition is skewed to low complexity. A compositionally biased stretch (acidic residues) spans 78 to 88 (DQEDDEDEEEP). A bHLH domain is found at 125–174 (ISDDPQSVAARHRRERISERIRILQRLVPGGTKMDTASMLDEAIRYVKFL). Positions 183–224 (NNTGYTPPPPQDQASQAVTTSWVSPPPPPSFGRGGRGVGELI) are disordered. A compositionally biased stretch (polar residues) spans 194–204 (DQASQAVTTSW). Gly residues predominate over residues 214-224 (GRGGRGVGELI).

Homodimer. Interacts with SPT. As to expression, gynoecium.

The protein resides in the nucleus. Its function is as follows. Required for the female reproductive tract development and fertility. This is Transcription factor HEC3 (HEC3) from Arabidopsis thaliana (Mouse-ear cress).